The following is a 160-amino-acid chain: Deoxyuridine 5'-triphosphate nucleotidohydrolase (160 aa).

Substrate is bound by residues 76–78 (RSG), Asn-89, and 93–95 (TID). Positions 139 to 149 (HTLSDTERGED) are enriched in basic and acidic residues. Positions 139–160 (HTLSDTERGEDGFGSTGHGSHQ) are disordered. Positions 150-160 (GFGSTGHGSHQ) are enriched in gly residues.

It belongs to the dUTPase family. Mg(2+) serves as cofactor.

It carries out the reaction dUTP + H2O = dUMP + diphosphate + H(+). Its pathway is pyrimidine metabolism; dUMP biosynthesis; dUMP from dCTP (dUTP route): step 2/2. Functionally, this enzyme is involved in nucleotide metabolism: it produces dUMP, the immediate precursor of thymidine nucleotides and it decreases the intracellular concentration of dUTP so that uracil cannot be incorporated into DNA. The polypeptide is Deoxyuridine 5'-triphosphate nucleotidohydrolase (Beijerinckia indica subsp. indica (strain ATCC 9039 / DSM 1715 / NCIMB 8712)).